The following is a 107-amino-acid chain: MAEAAHGGGLRGRGVLLGGVQDAPAGRENDLETIELARFAVAEHNAKANALLEFEKLVKVRQQVVAGCMHYFTIEVKEGGAKKLYEAKVWEKAWENFKQLQEFKPAA.

The region spanning 18 to 107 (GGVQDAPAGR…KQLQEFKPAA (90 aa)) is the Cystatin domain. The Secondary area of contact signature appears at 63–67 (QVVAG).

This sequence belongs to the cystatin family. Phytocystatin subfamily. As to expression, expressed in embryos, developing endosperms, leaves, roots, flowers and pollen grains.

In terms of biological role, inhibits papain, ficin, cathepsin B and, to a lesser extent, chymopapain, but is inactive against bromelain. Inhibits the growth of pathogenic fungi. Regulated by the DOF transcription factors SAD (activator) and BPBF (repressor). In Hordeum vulgare (Barley), this protein is Cysteine proteinase inhibitor (ICY).